The sequence spans 285 residues: MSTNDNWYIEHFQPTGSAIGFRISGKLDEVQSPFQKIEIYQTTDWGKLMLIDGAVMLTSRDNFFYHEMISHPALFTHPAPKRVVIIGGGDCGTLREVLKHPGVESATQCDIDEQVTRMSEKYFPELCDANHDARAELLFDDGVAYMANCPAGSVDIVIVDSTDPVGPAEGLFNKAFYESCFKALKDEGILVQQSESPLALLDLINEMRTEMGKAGFQSFKTLPFPQPCYPTGWWSVTMASKQANADFAFRQADAQAKGFDTLYYTAHLHTGVLVAPPFVAKALGE.

Residues 5–241 (DNWYIEHFQP…GWWSVTMASK (237 aa)) enclose the PABS domain. Glutamine 35 serves as a coordination point for S-methyl-5'-thioadenosine. Histidine 66 and aspartate 90 together coordinate spermidine. S-methyl-5'-thioadenosine is bound by residues aspartate 110 and 141–142 (DG). The Proton acceptor role is filled by aspartate 160. 160–163 (DSTD) serves as a coordination point for spermidine. Proline 167 lines the S-methyl-5'-thioadenosine pocket.

It belongs to the spermidine/spermine synthase family. As to quaternary structure, homodimer or homotetramer.

It is found in the cytoplasm. It catalyses the reaction S-adenosyl 3-(methylsulfanyl)propylamine + putrescine = S-methyl-5'-thioadenosine + spermidine + H(+). Its pathway is amine and polyamine biosynthesis; spermidine biosynthesis; spermidine from putrescine: step 1/1. Functionally, catalyzes the irreversible transfer of a propylamine group from the amino donor S-adenosylmethioninamine (decarboxy-AdoMet) to putrescine (1,4-diaminobutane) to yield spermidine. The sequence is that of Polyamine aminopropyltransferase from Xanthomonas euvesicatoria pv. vesicatoria (strain 85-10) (Xanthomonas campestris pv. vesicatoria).